The sequence spans 447 residues: MKTPKVGFVSLGCPKALVDSERILTQLKTEGYQVASDYDGADLVVVNTCGFIESAVQESLDAIGEAMSENGRVIVTGCLGKDEDKIRQMHPNVLKVTGAAAYQDVMEAVHEYVPAPPKHNPFIDLVPEQGIRLTPKHYAYLKISEGCNHRCTFCIIPSMRGDLVSRPVGSVLEEAAALKRAGVKEILVISQDTSAYGVDTKYKLDFWNGQPVKTKFFDMCEALGQLGIWVRLHYVYPYPHVDAVIDLMAQGKILPYLDIPFQHASPRVLKLMKRPAHSENTLEKIKLWREKCPNLVIRSTFVVGFPGETEEDFQILLDWLVEAQLDRVGCFTYSPVEGATANDLPDHVPEEIKQERYERFMQVQQQISAAKLQKRIGQTMTVLVDSLEDEYPVAVARSYADAPEIDGNVFVEDIDKSTIQPGDMLEVEITDADEYDLFAKLIKIKSV.

Positions Pro4–Pro114 constitute an MTTase N-terminal domain. [4Fe-4S] cluster is bound by residues Cys13, Cys49, Cys78, Cys147, Cys151, and Cys154. A Radical SAM core domain is found at Leu133–Ala370. Positions Gln373–Lys443 constitute a TRAM domain.

This sequence belongs to the methylthiotransferase family. RimO subfamily. [4Fe-4S] cluster serves as cofactor.

Its subcellular location is the cytoplasm. It carries out the reaction L-aspartate(89)-[ribosomal protein uS12]-hydrogen + (sulfur carrier)-SH + AH2 + 2 S-adenosyl-L-methionine = 3-methylsulfanyl-L-aspartate(89)-[ribosomal protein uS12]-hydrogen + (sulfur carrier)-H + 5'-deoxyadenosine + L-methionine + A + S-adenosyl-L-homocysteine + 2 H(+). Its function is as follows. Catalyzes the methylthiolation of an aspartic acid residue of ribosomal protein uS12. The sequence is that of Ribosomal protein uS12 methylthiotransferase RimO from Acinetobacter baumannii (strain AB307-0294).